Consider the following 416-residue polypeptide: Phosphatidylinositol 5-phosphate 4-kinase type-2 beta (416 aa).

N-acetylserine is present on serine 2. Phosphothreonine is present on threonine 8. Residue serine 19 is modified to Phosphoserine. The PIPK domain occupies 38-415 (ASEPILSVLM…RFNEFMSNIL (378 aa)). A required for interaction with PIP5K1A region spans residues 64–70 (VMLMPDD). N6-acetyllysine occurs at positions 94 and 150. ATP is bound by residues 202–204 (RNV) and lysine 214. Residues 203-204 (NV) and lysine 214 each bind GTP. Residue threonine 322 is modified to Phosphothreonine. Serine 326 carries the post-translational modification Phosphoserine. Aspartate 369 provides a ligand contact to GTP.

As to quaternary structure, homodimer. Binds TNFRSF1A. Interacts with PIP4K2A; the interaction suppresses ubiquitination by the SPOP/CUL3 complex. In terms of processing, ubiquitinated by the SPOP/CUL3 complex. Ubiquitination is stimulated by PtdIns5P levels. Post-translationally, phosphorylated on serine residues. Highly expressed in brain, heart, pancreas, skeletal muscle and kidney. Detected at lower levels in placenta, lung and liver.

It localises to the endoplasmic reticulum membrane. The protein localises to the cell membrane. It is found in the nucleus. Its subcellular location is the cytoplasm. The catalysed reaction is a 1,2-diacyl-sn-glycero-3-phospho-(1D-myo-inositol-5-phosphate) + ATP = a 1,2-diacyl-sn-glycero-3-phospho-(1D-myo-inositol-4,5-bisphosphate) + ADP + H(+). The enzyme catalyses 1,2-dihexadecanoyl-sn-glycero-3-phospho-(1D-myo-inositol-5-phosphate) + ATP = 1,2-dihexadecanoyl-sn-glycero-3-phospho-(1D-myo-inositol-4,5-bisphosphate) + ADP + H(+). It carries out the reaction 1,2-dihexadecanoyl-sn-glycero-3-phospho-(1D-myo-inositol-5-phosphate) + GTP = 1,2-dihexadecanoyl-sn-glycero-3-phospho-(1D-myo-inositol-4,5-bisphosphate) + GDP + H(+). Participates in the biosynthesis of phosphatidylinositol 4,5-bisphosphate. Preferentially utilizes GTP, rather than ATP, for PI(5)P phosphorylation and its activity reflects changes in direct proportion to the physiological GTP concentration. Its GTP-sensing activity is critical for metabolic adaptation. PIP4Ks negatively regulate insulin signaling through a catalytic-independent mechanism. They interact with PIP5Ks and suppress PIP5K-mediated PtdIns(4,5)P2 synthesis and insulin-dependent conversion to PtdIns(3,4,5)P3. The polypeptide is Phosphatidylinositol 5-phosphate 4-kinase type-2 beta (Homo sapiens (Human)).